We begin with the raw amino-acid sequence, 513 residues long: ATP synthase subunit alpha (513 aa).

Residue 171-178 (GDRQIGKT) participates in ATP binding.

It belongs to the ATPase alpha/beta chains family. F-type ATPases have 2 components, CF(1) - the catalytic core - and CF(0) - the membrane proton channel. CF(1) has five subunits: alpha(3), beta(3), gamma(1), delta(1), epsilon(1). CF(0) has three main subunits: a(1), b(2) and c(9-12). The alpha and beta chains form an alternating ring which encloses part of the gamma chain. CF(1) is attached to CF(0) by a central stalk formed by the gamma and epsilon chains, while a peripheral stalk is formed by the delta and b chains.

It is found in the cell membrane. The enzyme catalyses ATP + H2O + 4 H(+)(in) = ADP + phosphate + 5 H(+)(out). Its function is as follows. Produces ATP from ADP in the presence of a proton gradient across the membrane. The alpha chain is a regulatory subunit. The sequence is that of ATP synthase subunit alpha from Wolbachia pipientis subsp. Culex pipiens (strain wPip).